Reading from the N-terminus, the 364-residue chain is Carbamoyl phosphate synthase pyrimidine-specific small chain (364 aa).

The segment at 1-171 is CPSase; that stretch reads MKRRLVLENG…AYPSPGRGKR (171 aa). L-glutamine contacts are provided by serine 45, glycine 219, and glycine 221. A Glutamine amidotransferase type-1 domain is found at 171–356; that stretch reads RIVLVDFGMK…IEMIETTEKE (186 aa). Cysteine 246 (nucleophile) is an active-site residue. Leucine 247, glutamine 250, asparagine 288, glycine 290, and tyrosine 291 together coordinate L-glutamine. Active-site residues include histidine 329 and glutamate 331.

The protein belongs to the CarA family. In terms of assembly, composed of two chains; the small (or glutamine) chain promotes the hydrolysis of glutamine to ammonia, which is used by the large (or ammonia) chain to synthesize carbamoyl phosphate. Tetramer of heterodimers (alpha,beta)4. Interacts with BrxC.

The catalysed reaction is hydrogencarbonate + L-glutamine + 2 ATP + H2O = carbamoyl phosphate + L-glutamate + 2 ADP + phosphate + 2 H(+). It catalyses the reaction L-glutamine + H2O = L-glutamate + NH4(+). It functions in the pathway pyrimidine metabolism; UMP biosynthesis via de novo pathway; (S)-dihydroorotate from bicarbonate: step 1/3. In terms of biological role, small subunit of the glutamine-dependent carbamoyl phosphate synthetase (CPSase). CPSase catalyzes the formation of carbamoyl phosphate from the ammonia moiety of glutamine, carbonate, and phosphate donated by ATP, constituting the first step of the biosynthetic pathway leading to arginine and/or urea. The small subunit (glutamine amidotransferase) binds and cleaves glutamine to supply the large subunit with the substrate ammonia. This Bacillus subtilis (strain 168) protein is Carbamoyl phosphate synthase pyrimidine-specific small chain.